The primary structure comprises 308 residues: Glutaminase (308 aa).

Serine 66, asparagine 117, glutamate 161, asparagine 168, tyrosine 192, tyrosine 244, and valine 262 together coordinate substrate.

This sequence belongs to the glutaminase family. As to quaternary structure, homotetramer.

It catalyses the reaction L-glutamine + H2O = L-glutamate + NH4(+). This Enterobacter sp. (strain 638) protein is Glutaminase.